The chain runs to 479 residues: Endo-beta-1,6-galactanase (479 aa).

A signal peptide spans M1–A20. N-linked (GlcNAc...) asparagine glycosylation is present at N89. E210 acts as the Proton donor in catalysis. N-linked (GlcNAc...) asparagine glycosylation is present at N271. Catalysis depends on E311, which acts as the Nucleophile. N358 carries an N-linked (GlcNAc...) asparagine glycan.

The enzyme catalyses Endohydrolysis of (1-&gt;6)-beta-D-galactosidic linkages in arabinogalactan proteins and (1-&gt;3):(1-&gt;6)-beta-galactans to yield galactose and beta-(1-&gt;6)-galactaobiose as the final products.. In terms of biological role, hydrolyzes galactooligomers with a degree of polymerization higher than 3. Hydrolyzes radish root arabinogalactan-protein. Does not hydrolyze dextran, arabinan, starch, laminarin, beta-1,4- and beta-1,3-galactans, larch wood arabinogalactan or acid-insoluble polygalacturonic acid. The chain is Endo-beta-1,6-galactanase from Hypocrea rufa (Trichoderma viride).